A 478-amino-acid chain; its full sequence is Adenosylhomocysteinase (478 aa).

Positions 67, 144, and 204 each coordinate substrate. 205–207 (TTT) is an NAD(+) binding site. Substrate is bound by residues Lys-234 and Asp-238. NAD(+)-binding positions include Asn-239, 268 to 273 (GYGDVG), Glu-291, Asn-326, 347 to 349 (IGH), and Asn-392.

The protein belongs to the adenosylhomocysteinase family. It depends on NAD(+) as a cofactor.

It localises to the cytoplasm. It carries out the reaction S-adenosyl-L-homocysteine + H2O = L-homocysteine + adenosine. The protein operates within amino-acid biosynthesis; L-homocysteine biosynthesis; L-homocysteine from S-adenosyl-L-homocysteine: step 1/1. In terms of biological role, may play a key role in the regulation of the intracellular concentration of adenosylhomocysteine. In Nitrosomonas europaea (strain ATCC 19718 / CIP 103999 / KCTC 2705 / NBRC 14298), this protein is Adenosylhomocysteinase.